The sequence spans 313 residues: Ribosomal RNA small subunit methyltransferase H (313 aa).

S-adenosyl-L-methionine-binding positions include G35–H37, D55, F79, D101, and Q108.

This sequence belongs to the methyltransferase superfamily. RsmH family.

It is found in the cytoplasm. The catalysed reaction is cytidine(1402) in 16S rRNA + S-adenosyl-L-methionine = N(4)-methylcytidine(1402) in 16S rRNA + S-adenosyl-L-homocysteine + H(+). In terms of biological role, specifically methylates the N4 position of cytidine in position 1402 (C1402) of 16S rRNA. The chain is Ribosomal RNA small subunit methyltransferase H from Shigella flexneri.